The chain runs to 785 residues: Terminal nucleotidyltransferase 4A (785 aa).

A disordered region spans residues 56–184; sequence AAGRAAPAAG…QFHPGRRKRE (129 aa). Residues 68–85 show a composition bias toward pro residues; the sequence is GPAPAASSPPPAPGPAAL. Low complexity-rich tracts occupy residues 86–98 and 106–145; these read PPALLTALGPAAD and SPSLSSSSSSSSSNAESGTESPGCSSSSSSSTSLGRAGSG. The Mg(2+) site is built by Asp290 and Asp292. 4 residues coordinate ATP: Gly353, Lys378, Ser396, and Tyr397. Positions 421–480 constitute a PAP-associated domain; that stretch reads NLGMLLVEFFELYGRNFNYLKTGIRIKEGGAYIAKEEIMKAMTSGYRPSMLCIEDPLLPG. ATP-binding residues include Asn481 and Arg485. The segment covering 593–611 has biased composition (low complexity); the sequence is PQLLSSGSSASSVSSLSGS. 2 disordered regions span residues 593–625 and 731–785; these read PQLLSSGSSASSVSSLSGSDIDSDTPPCTTPSV and KGSH…SLSR. A compositionally biased stretch (basic residues) spans 757–774; sequence RGHHQYNRTGWRRKKHAH.

Belongs to the DNA polymerase type-B-like family. As to quaternary structure, component of a nuclear TRAMP-like complex, an ATP-dependent exosome regulatory complex consisting of a helicase (MTREX), an oligadenylate polymerase (TENT4B or TENT4A), and a substrate specific RNA-binding factor (ZCCHC7 or ZCCHC8). Several TRAMP-like complexes exist with specific compositions and are associated with nuclear, or nucleolar RNA exosomes. Requires Mg(2+) as cofactor. It depends on Mn(2+) as a cofactor.

It localises to the cytoplasm. Its subcellular location is the nucleus. The protein localises to the nucleoplasm. It catalyses the reaction RNA(n) + ATP = RNA(n)-3'-adenine ribonucleotide + diphosphate. Functionally, terminal nucleotidyltransferase that catalyzes preferentially the transfer of ATP and GTP on RNA 3' poly(A) tail creating a heterogeneous 3' poly(A) tail leading to mRNAs stabilization by protecting mRNAs from active deadenylation. Also functions as a catalytic subunit of a TRAMP-like complex which has a poly(A) RNA polymerase activity and is involved in a post-transcriptional quality control mechanism. Polyadenylation with short oligo(A) tails is required for the degradative activity of the exosome on several of its nuclear RNA substrates. Has no terminal uridylyltransferase activity, and does not play a role in replication-dependent histone mRNA degradation via uridylation. The sequence is that of Terminal nucleotidyltransferase 4A from Mus musculus (Mouse).